The chain runs to 1220 residues: Plasma membrane calcium-transporting ATPase 1 (1220 aa).

Position 2 is an N-acetylglycine (Gly2). Topologically, residues 2 to 105 (GDMANNSVAY…KTFLQLVWEA (104 aa)) are cytoplasmic. 2 positions are modified to phosphoserine: Ser8 and Ser17. A helical membrane pass occupies residues 106–126 (LQDVTLIILEIAAIVSLGLSF). Topologically, residues 127 to 154 (YQPPEGDNALCGEVSVGEEEGEGETGWI) are extracellular. The helical transmembrane segment at 155–175 (EGAAILLSVVCVVLVTAFNDW) threads the bilayer. The Cytoplasmic portion of the chain corresponds to 176–366 (SKEKQFRGLQ…KEKSVLQGKL (191 aa)). A disordered region spans residues 297–356 (EEEKKDEKKKEKKNKKQDGAIENRNKAKAQDGAAMEMQPLKSEEGGDGDEKDKKKANLPK). Basic and acidic residues-rich tracts occupy residues 312–325 (KQDG…KAKA) and 337–356 (KSEE…NLPK). Ser338 is subject to Phosphoserine. Residues 367 to 386 (TKLAVQIGKAGLLMSAITVI) traverse the membrane as a helical segment. The Extracellular segment spans residues 387–418 (ILVLYFVIDTFWVQKRPWLAECTPIYIQYFVK). A helical transmembrane segment spans residues 419 to 439 (FFIIGVTVLVVAVPEGLPLAV). Residues 440-855 (TISLAYSVKK…RNVYDSISKF (416 aa)) are Cytoplasmic-facing. Asp475 (4-aspartylphosphate intermediate) is an active-site residue. Asp475, Thr477, and Asp797 together coordinate Mg(2+). A helical membrane pass occupies residues 856 to 876 (LQFQLTVNVVAVIVAFTGACI). The Extracellular segment spans residues 877–882 (TQDSPL). Residues 883-903 (KAVQMLWVNLIMDTLASLALA) form a helical membrane-spanning segment. Residues 904–927 (TEPPTESLLLRKPYGRNKPLISRT) are Cytoplasmic-facing. The chain crosses the membrane as a helical span at residues 928–948 (MMKNILGHAFYQLVVVFTLLF). Residues 949–971 (AGEKFFDIDSGRNAPLHAPPSEH) lie on the Extracellular side of the membrane. The chain crosses the membrane as a helical span at residues 972–991 (YTIVFNTFVLMQLFNEINAR). At 992-1005 (KIHGERNVFEGIFN) the chain is on the cytoplasmic side. Residues 1006-1027 (NAIFCTIVLGTFVVQIIIVQFG) form a helical membrane-spanning segment. Over 1028 to 1039 (GKPFSCSELSIE) the chain is Extracellular. The chain crosses the membrane as a helical span at residues 1040–1060 (QWLWSIFLGMGTLLWGQLIST). Residues 1061-1220 (IPTSRLKFLK…SPLHSLETSL (160 aa)) lie on the Cytoplasmic side of the membrane. A calmodulin-binding subdomain A region spans residues 1100 to 1117 (LRRGQILWFRGLNRIQTQ). Phosphothreonine; by PKC is present on Thr1116. Positions 1118–1220 (IRVVNAFRSS…SPLHSLETSL (103 aa)) are required for basolateral membrane targeting. Residues Ser1140 and Ser1155 each carry the phosphoserine modification. Residues 1162-1220 (IDDTDAEDDAPTKRNSSPPPSPNKNNNAVDSGIHLTIEMNKSATSSSPGSPLHSLETSL) are disordered. Phosphothreonine is present on Thr1165. At Ser1177 the chain carries Phosphoserine; by PKA. Ser1178 and Ser1182 each carry phosphoserine. A compositionally biased stretch (polar residues) spans 1200–1220 (MNKSATSSSPGSPLHSLETSL).

The protein belongs to the cation transport ATPase (P-type) (TC 3.A.3) family. Type IIB subfamily. Monomer. Dimer. Oligomer. Calmodulin binding. Interacts with PDZD11. Interacts with SLC35G1 and STIM1. Interacts with YWHAE; interacts with the monomeric and dimeric forms of the YWHAE but prefer the monomer form; this interaction inhibits calcium-transporting ATPase activity. Interacts with NPTN; this interaction stabilizes ATP2B1 and increases ATPase activity; this interaction controls T cell calcium homeostasis following T cell activation. Interacts with EPB41; regulates small intestinal calcium absorption through regulation of membrane expression of ATP2B1. In terms of tissue distribution, isoform B is ubiquitously expressed. Isoforms A and E have only been found in brain cortex. Isoform C is found in brain cortex, skeletal muscle and heart muscle. Isoform D has only been found in fetal skeletal muscle. Isoform K has been found in small intestine and liver. Isoform B is expressed in hair cells of inner ear.

Its subcellular location is the cell membrane. It localises to the basolateral cell membrane. The protein resides in the synapse. It is found in the presynaptic cell membrane. The protein localises to the cytoplasmic vesicle. Its subcellular location is the secretory vesicle. It localises to the synaptic vesicle membrane. The catalysed reaction is Ca(2+)(in) + ATP + H2O = Ca(2+)(out) + ADP + phosphate + H(+). Its function is as follows. Catalyzes the hydrolysis of ATP coupled with the transport of calcium from the cytoplasm to the extracellular space thereby maintaining intracellular calcium homeostasis. Plays a role in blood pressure regulation through regulation of intracellular calcium concentration and nitric oxide production leading to regulation of vascular smooth muscle cells vasoconstriction. Positively regulates bone mineralization through absorption of calcium from the intestine. Plays dual roles in osteoclast differentiation and survival by regulating RANKL-induced calcium oscillations in preosteoclasts and mediating calcium extrusion in mature osteoclasts. Regulates insulin sensitivity through calcium/calmodulin signaling pathway by regulating AKT1 activation and NOS3 activation in endothelial cells. May play a role in synaptic transmission by modulating calcium and proton dynamics at the synaptic vesicles. This Rattus norvegicus (Rat) protein is Plasma membrane calcium-transporting ATPase 1.